A 125-amino-acid polypeptide reads, in one-letter code: Small ribosomal subunit protein uS13 (125 aa).

The disordered stretch occupies residues 101–125 (QRTKTNARTRKGKRKTVANKKIAAK).

Belongs to the universal ribosomal protein uS13 family. Part of the 30S ribosomal subunit. Forms a loose heterodimer with protein S19. Forms two bridges to the 50S subunit in the 70S ribosome.

Functionally, located at the top of the head of the 30S subunit, it contacts several helices of the 16S rRNA. In the 70S ribosome it contacts the 23S rRNA (bridge B1a) and protein L5 of the 50S subunit (bridge B1b), connecting the 2 subunits; these bridges are implicated in subunit movement. Contacts the tRNAs in the A and P-sites. This is Small ribosomal subunit protein uS13 from Borrelia duttonii (strain Ly).